The following is a 75-amino-acid chain: Protein CYSTEINE-RICH TRANSMEMBRANE MODULE 5 (75 aa).

A disordered region spans residues 1–29 (MSQYSQNQYAGAYPTPPVSTGPYVAPPPL). Residues 14-29 (PTPPVSTGPYVAPPPL) show a composition bias toward pro residues. The chain crosses the membrane as a helical span at residues 52 to 69 (AADGFLKGCLATMLACCV).

The protein belongs to the CYSTM1 family. As to quaternary structure, heterodimers. Interacts with CYSTM7 and WIH1/CYSTM13. As to expression, mostly expressed in roots, stems, rosette leaves and siliques and, to a lower extent, in flowers and cauline leaves.

The protein resides in the cell membrane. Its subcellular location is the nucleus. In terms of biological role, involved in resistance to abiotic stress. The chain is Protein CYSTEINE-RICH TRANSMEMBRANE MODULE 5 from Arabidopsis thaliana (Mouse-ear cress).